The primary structure comprises 1486 residues: Chromosome partition protein MukB (1486 aa).

34–41 provides a ligand contact to ATP; it reads GGNGAGKS. 3 coiled-coil regions span residues 326 to 418, 444 to 480, and 509 to 603; these read LEAD…QYNQ, LETF…QAYQ, and RHLA…RAPV. The flexible hinge stretch occupies residues 666–783; it reads PGGSEDQRLN…EVPLFGRAAR (118 aa). 3 coiled-coil regions span residues 835-923, 977-1115, and 1209-1266; these read EAEI…AKLE, EMLS…TAKA, and VEAI…QNVS.

Belongs to the SMC family. MukB subfamily. In terms of assembly, homodimerization via its hinge domain. Binds to DNA via its C-terminal region. Interacts, and probably forms a ternary complex, with MukE and MukF via its C-terminal region. The complex formation is stimulated by calcium or magnesium. Interacts with tubulin-related protein FtsZ.

The protein localises to the cytoplasm. It is found in the nucleoid. Plays a central role in chromosome condensation, segregation and cell cycle progression. Functions as a homodimer, which is essential for chromosome partition. Involved in negative DNA supercoiling in vivo, and by this means organize and compact chromosomes. May achieve or facilitate chromosome segregation by condensation DNA from both sides of a centrally located replisome during cell division. In Escherichia coli O6:H1 (strain CFT073 / ATCC 700928 / UPEC), this protein is Chromosome partition protein MukB.